Consider the following 312-residue polypeptide: Erlin (312 aa).

Over 1-3 the chain is Cytoplasmic; sequence MLT. A helical transmembrane segment spans residues 4–24; that stretch reads ELALGLFALWIAIFSQALHKI. The Lumenal segment spans residues 25-312; sequence EEGHVGVYYR…FVMGTTQQTV (288 aa). N-linked (GlcNAc...) asparagine glycosylation occurs at Asn-104.

This sequence belongs to the band 7/mec-2 family. In terms of assembly, seems to form a multimeric complex. In terms of tissue distribution, expressed in the germline only.

Its subcellular location is the endoplasmic reticulum membrane. In Caenorhabditis elegans, this protein is Erlin.